Consider the following 1321-residue polypeptide: Insulin receptor substrate 2 (1321 aa).

Residues 1-10 show a composition bias toward pro residues; it reads MASAPLPGPP. 2 disordered regions span residues 1–32 and 51–73; these read MASAPLPGPPASAGGDGPNLNNNNNNNNHSVR and RGPGTGGDEASAAGGSPPQPPRL. The region spanning 16-144 is the PH domain; it reads DGPNLNNNNN…WYRALTDLVS (129 aa). Residues 18–28 are compositionally biased toward low complexity; it reads PNLNNNNNNNN. The region spanning 191 to 295 is the IRS-type PTB domain; that stretch reads YREVWQVNLK…EAMKALKELF (105 aa). The tract at residues 299-536 is disordered; that stretch reads PRSKSQSSGS…ARDGSGGELY (238 aa). A phosphoserine mark is found at S303 and S343. T347 carries the phosphothreonine modification. Phosphoserine is present on S362. Over residues 364-376 the composition is skewed to gly residues; that stretch reads GDGGAAGGAGTAG. Phosphoserine is present on residues S381, S385, and S388. The residue at position 409 (R409) is an Omega-N-methylarginine. Low complexity-rich tracts occupy residues 435-456 and 478-490; these read SPPAATSPGSLSSSSGHGSGSY and PSSGSASASGSPS. Residue T517 is modified to Phosphothreonine. The residue at position 520 (S520) is a Phosphoserine. The residue at position 524 (T524) is a Phosphothreonine. Residue Y536 is modified to Phosphotyrosine; by INSR. The YXXM motif 1 motif lies at 536-539; that stretch reads YGYM. Residue S556 is modified to Phosphoserine; by PLK1. S573 carries the post-translational modification Phosphoserine. 2 positions are modified to phosphothreonine: T575 and T576. S590 carries the phosphoserine modification. The short motif at 594-597 is the YXXM motif 2 element; it reads YTLM. A phosphoserine mark is found at S604 and S616. The residue at position 649 (Y649) is a Phosphotyrosine. 2 consecutive short sequence motifs (YXXM motif) follow at residues 649–652 and 671–674; these read YMPM. Y671 bears the Phosphotyrosine; by INSR mark. A phosphoserine mark is found at S675, S678, S727, and S728. A YXXM motif 5 motif is present at residues 734-737; the sequence is YMRM. Position 762 is a phosphoserine (S762). At T771 the chain carries Phosphothreonine. Residue S796 is modified to Phosphoserine. The YXXM motif 6 signature appears at 814–817; sequence YVLM. Phosphoserine is present on S819. Disordered regions lie at residues 834–871 and 888–1091; these read ATPGAGTFGAAGGSHTQPHHSAVPSSMRPSAIGGRPEG and EGLQ…ASPT. Phosphoserine is present on S907. The residue at position 911 (Y911) is a Phosphotyrosine; by INSR. Over residues 930–959 the composition is skewed to low complexity; the sequence is LLASAASSSSLLSASSPASSLGSGTPGTSS. Position 965 is a phosphoserine (S965). At Y970 the chain carries Phosphotyrosine; by INSR. Residues 1005–1014 are compositionally biased toward pro residues; the sequence is PYPPLPPRPS. Residues 1039-1055 show a composition bias toward polar residues; it reads AATSQGPTAGSSMSSEP. A YXXM motif 7 motif is present at residues 1061–1064; the sequence is YTEM. T1071 carries the phosphothreonine modification. A compositionally biased stretch (pro residues) spans 1072 to 1082; sequence PPQPIVAPPKP. Position 1089 is a phosphoserine (S1089). S1098 is modified (phosphoserine; by PLK1). Positions 1110–1198 are disordered; it reads LQVSQPPDPH…TSPGQAQPLV (89 aa). Residues 1139–1154 show a composition bias toward low complexity; it reads ETFSSTTTVTPVSPSF. At T1148 the chain carries Phosphothreonine. Residues S1151, S1163, S1165, S1175, and S1190 each carry the phosphoserine modification. Residues 1163–1179 are compositionally biased toward polar residues; sequence SASVENVSLRKSSEGSS. Y1242 bears the Phosphotyrosine; by INSR mark. Positions 1251–1275 are disordered; the sequence is QGSLAQSQPQPGDKNSWSRTRSLGG. Over residues 1253–1271 the composition is skewed to polar residues; it reads SLAQSQPQPGDKNSWSRTR. Y1303 is subject to Phosphotyrosine; by INSR. A Glycyl lysine isopeptide (Lys-Gly) (interchain with G-Cter in ubiquitin) cross-link involves residue K1314.

In terms of assembly, interacts with PHIP. Interacts with SH2B1; this interaction enhances leptin-induced activation of the PI3-kinase pathway. Interacts with GRB2. Interacts with PIK3R1. Interacts with DVL2; this interaction promotes the Wnt/beta-catenin signaling pathway. Post-translationally, phosphorylation fluctuates in a cell-cycle dependent manner with hyperphosphorylation during mitosis. Phosphorylated at Ser-556 and Ser-1098 by PLK1; these phosphorylations prevent the activation of the PI3K pathway upon growth factor stimulation by inhibiting the binding between IRS2 and the PI3K pathway components and increasing the level of IRS2 protein degradation. In addition, they prevent premature mitotic exit. Monoubiquitinated by NEDD4; leading to enhanced IGF1 signaling. During cell cycle, ubiquitination and proteasomal degradation are controlled by FZR1. In terms of tissue distribution, skeletal muscle, lung, brain, liver, kidney, heart and spleen.

Its subcellular location is the cytoplasm. It is found in the cytosol. Its function is as follows. Signaling adapter protein that participates in the signal transduction from two prominent receptor tyrosine kinases, insulin receptor/INSR and insulin-like growth factor I receptor/IGF1R. Plays therefore an important role in development, growth, glucose homeostasis as well as lipid metabolism. Upon phosphorylation by the insulin receptor, functions as a signaling scaffold that propagates insulin action through binding to SH2 domain-containing proteins including the p85 regulatory subunit of PI3K, NCK1, NCK2, GRB2 or SHP2. Recruitment of GRB2 leads to the activation of the guanine nucleotide exchange factor SOS1 which in turn triggers the Ras/Raf/MEK/MAPK signaling cascade. Activation of the PI3K/AKT pathway is responsible for most of insulin metabolic effects in the cell, and the Ras/Raf/MEK/MAPK is involved in the regulation of gene expression and in cooperation with the PI3K pathway regulates cell growth and differentiation. Acts a positive regulator of the Wnt/beta-catenin signaling pathway through suppression of DVL2 autophagy-mediated degradation leading to cell proliferation. Plays a role in cell cycle progression by promoting a robust spindle assembly checkpoint (SAC) during M-phase. In macrophages, IL4-induced tyrosine phosphorylation of IRS2 leads to the recruitment and activation of phosphoinositide 3-kinase (PI3K). The protein is Insulin receptor substrate 2 (Irs2) of Mus musculus (Mouse).